Here is a 156-residue protein sequence, read N- to C-terminus: MSRRRTQKKRIVMPDPVYDSRLVELLVRQLMREGKKSLAYRICYESMNRVADATQQDPLVIVEQAIRNATPLVEVKARRIGGSTYQVPLEVASERGTALAIRWILSVCRKKTGRPMAAKLTAELLDAAKNSGLAVRKRDEIHKMADANKAFAKYRF.

This sequence belongs to the universal ribosomal protein uS7 family. Part of the 30S ribosomal subunit.

The protein localises to the plastid. The protein resides in the chloroplast. Functionally, one of the primary rRNA binding proteins, it binds directly to 16S rRNA where it nucleates assembly of the head domain of the 30S subunit. The protein is Small ribosomal subunit protein uS7c (rps7) of Chlorella vulgaris (Green alga).